Here is a 248-residue protein sequence, read N- to C-terminus: Small ribosomal subunit protein uS2 (248 aa).

It belongs to the universal ribosomal protein uS2 family.

The polypeptide is Small ribosomal subunit protein uS2 (Alkalilimnicola ehrlichii (strain ATCC BAA-1101 / DSM 17681 / MLHE-1)).